A 323-amino-acid polypeptide reads, in one-letter code: Fructose-1,6-bisphosphatase class 1 (323 aa).

Mg(2+) is bound by residues Glu-88, Asp-107, Leu-109, and Asp-110. Substrate is bound by residues 110–113 (DGSS) and Asn-200. Glu-272 is a binding site for Mg(2+).

Belongs to the FBPase class 1 family. As to quaternary structure, homotetramer. Requires Mg(2+) as cofactor.

Its subcellular location is the cytoplasm. The enzyme catalyses beta-D-fructose 1,6-bisphosphate + H2O = beta-D-fructose 6-phosphate + phosphate. Its pathway is carbohydrate biosynthesis; gluconeogenesis. The polypeptide is Fructose-1,6-bisphosphatase class 1 (Acinetobacter baumannii (strain ATCC 17978 / DSM 105126 / CIP 53.77 / LMG 1025 / NCDC KC755 / 5377)).